The primary structure comprises 426 residues: Enolase (426 aa).

A (2R)-2-phosphoglycerate-binding site is contributed by Q163. E205 functions as the Proton donor in the catalytic mechanism. 3 residues coordinate Mg(2+): D242, E285, and D312. Residues K337, R366, S367, and K388 each coordinate (2R)-2-phosphoglycerate. The Proton acceptor role is filled by K337.

The protein belongs to the enolase family. Mg(2+) serves as cofactor.

Its subcellular location is the cytoplasm. The protein resides in the secreted. The protein localises to the cell surface. The catalysed reaction is (2R)-2-phosphoglycerate = phosphoenolpyruvate + H2O. The protein operates within carbohydrate degradation; glycolysis; pyruvate from D-glyceraldehyde 3-phosphate: step 4/5. In terms of biological role, catalyzes the reversible conversion of 2-phosphoglycerate (2-PG) into phosphoenolpyruvate (PEP). It is essential for the degradation of carbohydrates via glycolysis. The chain is Enolase from Rhodospirillum centenum (strain ATCC 51521 / SW).